Here is a 347-residue protein sequence, read N- to C-terminus: MSESNLKGRKVVLHDMCLRDGMHAKREQISVEQMVKVATALDDAGIPYLQVTHGAGLGGNSLQHGFALASNEEYIAAVASRMKQAKVSVLLIPGLGTMRELQAAYDAGARSVHVATHCTEADTAPQHIAFARKLGMDTTGFLMMSHLNDAAGIAQQGKLMESYGAQTVYVTDSAGYMLPADVTARVRALREVLNPETEIGFHGHHNLGMGIANSIAAIEAGATRIDGSVAGLGAGAGNTPLEVFAAVCERMGIETGVDLFKLMDVAEDVIVPMMDHMVRVDRESLTLGFAGVYSTFLLHAKRAAERFGVPARDILVELGRKKMIGGQEDMIQDTAMTMARERGVSAA.

The Pyruvate carboxyltransferase domain occupies 11–263 (VVLHDMCLRD…ETGVDLFKLM (253 aa)). 19–20 (RD) provides a ligand contact to substrate. Position 20 (Asp20) interacts with Mn(2+). The active-site Proton acceptor is His23. Substrate-binding residues include Ser173 and His202. Residues His202 and His204 each coordinate Mn(2+). Residue Tyr293 participates in substrate binding.

Belongs to the 4-hydroxy-2-oxovalerate aldolase family.

The enzyme catalyses (S)-4-hydroxy-2-oxopentanoate = acetaldehyde + pyruvate. The sequence is that of 4-hydroxy-2-oxovalerate aldolase 1 (lapG) from Azoarcus sp. (strain BH72).